Consider the following 224-residue polypeptide: UPF0758 protein PST_0473 (224 aa).

In terms of domain architecture, MPN spans 102-224 (ALESPQAVRD…PLSMAEYGWM (123 aa)). Residues His-173, His-175, and Asp-186 each contribute to the Zn(2+) site. Positions 173–186 (HNHPSGVAEPSQAD) match the JAMM motif motif.

This sequence belongs to the UPF0758 family.

This is UPF0758 protein PST_0473 from Stutzerimonas stutzeri (strain A1501) (Pseudomonas stutzeri).